The sequence spans 242 residues: Octanoyltransferase (242 aa).

One can recognise a BPL/LPL catalytic domain in the interval 31-206; that stretch reads SQTTDEIWFL…LFLKNFGYNQ (176 aa). Substrate-binding positions include 70–77, 137–139, and 150–152; these read RGGQVTYH, SIG, and GLA. Cysteine 168 (acyl-thioester intermediate) is an active-site residue.

Belongs to the LipB family.

The protein localises to the cytoplasm. It carries out the reaction octanoyl-[ACP] + L-lysyl-[protein] = N(6)-octanoyl-L-lysyl-[protein] + holo-[ACP] + H(+). It functions in the pathway protein modification; protein lipoylation via endogenous pathway; protein N(6)-(lipoyl)lysine from octanoyl-[acyl-carrier-protein]: step 1/2. In terms of biological role, catalyzes the transfer of endogenously produced octanoic acid from octanoyl-acyl-carrier-protein onto the lipoyl domains of lipoate-dependent enzymes. Lipoyl-ACP can also act as a substrate although octanoyl-ACP is likely to be the physiological substrate. The sequence is that of Octanoyltransferase from Coxiella burnetii (strain RSA 493 / Nine Mile phase I).